A 60-amino-acid polypeptide reads, in one-letter code: Large ribosomal subunit protein bL32 (60 aa).

It belongs to the bacterial ribosomal protein bL32 family.

This is Large ribosomal subunit protein bL32 from Fervidobacterium nodosum (strain ATCC 35602 / DSM 5306 / Rt17-B1).